The primary structure comprises 144 residues: Large ribosomal subunit protein uL11 (144 aa).

The protein belongs to the universal ribosomal protein uL11 family. Part of the ribosomal stalk of the 50S ribosomal subunit. Interacts with L10 and the large rRNA to form the base of the stalk. L10 forms an elongated spine to which L12 dimers bind in a sequential fashion forming a multimeric L10(L12)X complex. One or more lysine residues are methylated.

Its function is as follows. Forms part of the ribosomal stalk which helps the ribosome interact with GTP-bound translation factors. The polypeptide is Large ribosomal subunit protein uL11 (Corynebacterium efficiens (strain DSM 44549 / YS-314 / AJ 12310 / JCM 11189 / NBRC 100395)).